We begin with the raw amino-acid sequence, 301 residues long: D-psicose 3-epimerase (301 aa).

Tyr-16 is a binding site for substrate. The active-site Proton donor/acceptor is the Glu-162. Glu-162 is a Mn(2+) binding site. Substrate-binding positions include Glu-168 and Asp-195 to His-198. Residues Asp-195 and His-221 each contribute to the Mn(2+) site. Arg-227 contacts substrate. Catalysis depends on Glu-256, which acts as the Proton donor/acceptor. Glu-256 is a binding site for Mn(2+).

It belongs to the hyi family. As to quaternary structure, homotetramer. Requires Mn(2+) as cofactor. Co(2+) serves as cofactor.

It carries out the reaction D-allulose = keto-D-fructose. With respect to regulation, completely inhibited by EDTA and partially inhibited by Zn(2+), Mg(2+) and Cu(2+). Involved in the biosynthesis of D-psicose. Catalyzes the reversible epimerization of D-fructose at the C3 position to yield D-psicose. The enzyme is highly specific for D-psicose and shows very low activity with D-tagatose. The protein is D-psicose 3-epimerase of Enterocloster bolteae (strain ATCC BAA-613 / DSM 15670 / CCUG 46953 / JCM 12243 / WAL 16351) (Clostridium bolteae).